Reading from the N-terminus, the 1007-residue chain is Serine/threonine-protein kinase PRP4 homolog (1007 aa).

The span at 1–10 (MAAAETQSLR) shows a compositional bias: polar residues. Residues 1–99 (MAAAETQSLR…EGMSPAKRTK (99 aa)) are disordered. Ala2 carries the post-translational modification N-acetylalanine. Phosphoserine occurs at positions 8, 20, 23, and 32. Composition is skewed to basic residues over residues 39–59 (KHSR…KHKH) and 67–81 (KKHK…HKRK). Residues 82-91 (EVIDASDKEG) show a composition bias toward basic and acidic residues. Ser87 and Ser93 each carry phosphoserine. Lys99 carries the post-translational modification N6-acetyllysine; alternate. Lys99 is covalently cross-linked (Glycyl lysine isopeptide (Lys-Gly) (interchain with G-Cter in SUMO2); alternate). Lys111 participates in a covalent cross-link: Glycyl lysine isopeptide (Lys-Gly) (interchain with G-Cter in SUMO2). Lys117 participates in a covalent cross-link: Glycyl lysine isopeptide (Lys-Gly) (interchain with G-Cter in SUMO2); alternate. Lys117 participates in a covalent cross-link: Glycyl lysine isopeptide (Lys-Gly) (interchain with G-Cter in SUMO1); alternate. Residue Ser131 is modified to Phosphoserine. Tyr140 is subject to Phosphotyrosine. Disordered regions lie at residues 140-533 (YESG…EEED) and 559-583 (SNMS…SPDD). Ser142, Ser144, and Ser166 each carry phosphoserine. The span at 157-168 (GNRSSTRSSSTK) shows a compositional bias: low complexity. Residues Lys170 and Lys177 each participate in a glycyl lysine isopeptide (Lys-Gly) (interchain with G-Cter in SUMO2) cross-link. Basic residues-rich tracts occupy residues 179 to 202 (TTKK…KKSK) and 214 to 230 (RSKS…SKRS). A phosphoserine mark is found at Ser239, Ser241, Ser257, Ser277, Ser283, Ser292, and Ser294. Residues 247–270 (RSQEKIGKARSPTDDKVKIEDKSK) show a composition bias toward basic and acidic residues. Basic residues predominate over residues 302-315 (SKDRRSRSKERKSK). Residues 316 to 325 (RSETDKEKKP) are compositionally biased toward basic and acidic residues. Residues Ser328, Ser354, Ser356, Ser366, and Ser368 each carry the phosphoserine modification. The segment covering 342–367 (PSRRPGRSPKRRSLSPKPRDKSRRSR) has biased composition (basic residues). Thr385 is modified (phosphothreonine). Ser387 is subject to Phosphoserine. 2 stretches are compositionally biased toward basic and acidic residues: residues 395–408 (RSLE…ERRR) and 415–429 (RPRD…RSKD). Ser427, Ser431, and Ser437 each carry phosphoserine. Over residues 438-497 (PTRRRSRSPIRRRSRSPLRRSRSPRRRSRSPRRRDRGRRSRSRLRRRSRSRGGRRRRSRS) the composition is skewed to basic residues. A phosphoserine mark is found at Ser518, Ser519, Ser520, Ser565, Ser569, Ser578, and Ser580. Positions 518 to 533 (SSSDDNLEDFDVEEED) are enriched in acidic residues. The span at 562–581 (SVPSEPSSPQSSTRTRSPSP) shows a compositional bias: low complexity. Glycyl lysine isopeptide (Lys-Gly) (interchain with G-Cter in SUMO2) cross-links involve residues Lys593 and Lys659. Residues 687-1003 (YNVYGYTGQG…INQALQHAFI (317 aa)) form the Protein kinase domain. ATP contacts are provided by residues 693–701 (TGQGVFSNV) and Lys717. Lys717 bears the N6-acetyllysine mark. The Proton acceptor role is filled by Asp815. Residue Tyr849 is modified to Phosphotyrosine. Ser852 bears the Phosphoserine mark.

The protein belongs to the protein kinase superfamily. CMGC Ser/Thr protein kinase family. Interacts with CLK1 C-terminus. Associates with the U5 snRNP and NCOR1 deacetylase complexes. Identified in the spliceosome C complex. Post-translationally, phosphorylated by CLK1. Autophosphorylated; phosphorylation inhibits interaction with its targets, such as PRPF6 or SMARCA4.

It localises to the nucleus. The protein resides in the chromosome. The protein localises to the centromere. It is found in the kinetochore. It catalyses the reaction L-seryl-[protein] + ATP = O-phospho-L-seryl-[protein] + ADP + H(+). It carries out the reaction L-threonyl-[protein] + ATP = O-phospho-L-threonyl-[protein] + ADP + H(+). Serine/threonine kinase involved in spliceosomal assembly as well as mitosis and signaling regulation. Connects chromatin mediated regulation of transcription and pre-mRNA splicing. During spliceosomal assembly, interacts with and phosphorylates PRPF6 and PRPF31, components of the U4/U6-U5 tri-small nuclear ribonucleoprotein (snRNP), to facilitate the formation of the spliceosome B complex. Plays a role in regulating transcription and the spindle assembly checkpoint (SAC). Associates with U5 snRNP and NCOR1 deacetylase complexes which may allow a coordination of pre-mRNA splicing with chromatin remodeling events involved in transcriptional regulation. Associates and probably phosphorylates SMARCA4 and NCOR1. Phosphorylates SRSF1. Associates with kinetochores during mitosis and is necessary for recruitment and maintenance of the checkpoint proteins such as MAD1L1 and MAD12L1 at the kinetochores. Phosphorylates and regulates the activity of the transcription factors such as ELK1 and KLF13. Phosphorylates nuclear YAP1 and WWTR1/TAZ which induces nuclear exclusion and regulates Hippo signaling pathway, involved in tissue growth control. In Pongo abelii (Sumatran orangutan), this protein is Serine/threonine-protein kinase PRP4 homolog (PRP4K).